The chain runs to 151 residues: MAVTIDPKTFYANPPPGKPFYVRFEVPNDVAEKALEILSIARQTGKIKKGTNETTKAVERGLAKLVLIAEDVDPPEVVAHLPLLCEEKKVPYVYVPSKEKLGKAAGINVSAAAAVVIEPGQAAGELEALVSKINEVRAKHGLNAIPVPAKR.

The protein belongs to the eukaryotic ribosomal protein eL8 family. Part of the 50S ribosomal subunit. Probably part of the RNase P complex.

It is found in the cytoplasm. Multifunctional RNA-binding protein that recognizes the K-turn motif in ribosomal RNA, the RNA component of RNase P, box H/ACA, box C/D and box C'/D' sRNAs. The polypeptide is Large ribosomal subunit protein eL8 (Pyrobaculum aerophilum (strain ATCC 51768 / DSM 7523 / JCM 9630 / CIP 104966 / NBRC 100827 / IM2)).